The primary structure comprises 514 residues: tRNA-2-methylthio-N(6)-dimethylallyladenosine synthase (514 aa).

In terms of domain architecture, MTTase N-terminal spans 68–186 (RTFLIKTYGC…LPEILEEAYL (119 aa)). Cys77, Cys113, Cys147, Cys223, Cys227, and Cys230 together coordinate [4Fe-4S] cluster. The Radical SAM core domain occupies 209–439 (RDGHIKAWVN…NKKVGIYSQQ (231 aa)). Positions 442–505 (SQYEGKIVTV…QYSLNGTFIQ (64 aa)) constitute a TRAM domain.

It belongs to the methylthiotransferase family. MiaB subfamily. As to quaternary structure, monomer. [4Fe-4S] cluster serves as cofactor.

It is found in the cytoplasm. It catalyses the reaction N(6)-dimethylallyladenosine(37) in tRNA + (sulfur carrier)-SH + AH2 + 2 S-adenosyl-L-methionine = 2-methylsulfanyl-N(6)-dimethylallyladenosine(37) in tRNA + (sulfur carrier)-H + 5'-deoxyadenosine + L-methionine + A + S-adenosyl-L-homocysteine + 2 H(+). Its function is as follows. Catalyzes the methylthiolation of N6-(dimethylallyl)adenosine (i(6)A), leading to the formation of 2-methylthio-N6-(dimethylallyl)adenosine (ms(2)i(6)A) at position 37 in tRNAs that read codons beginning with uridine. The polypeptide is tRNA-2-methylthio-N(6)-dimethylallyladenosine synthase (Staphylococcus epidermidis (strain ATCC 35984 / DSM 28319 / BCRC 17069 / CCUG 31568 / BM 3577 / RP62A)).